A 134-amino-acid chain; its full sequence is Profilin-2 (134 aa).

A disulfide bridge connects residues Cys13 and Cys118. Residues 84–100 (AVIRGKKGSGGITIKKT) carry the Involved in PIP2 interaction motif. Residue Thr114 is modified to Phosphothreonine.

The protein belongs to the profilin family. In terms of assembly, occurs in many kinds of cells as a complex with monomeric actin in a 1:1 ratio. Phosphorylated by MAP kinases.

It localises to the cytoplasm. The protein localises to the cytoskeleton. In terms of biological role, binds to actin and affects the structure of the cytoskeleton. At high concentrations, profilin prevents the polymerization of actin, whereas it enhances it at low concentrations. The protein is Profilin-2 of Olea europaea (Common olive).